The sequence spans 24 residues: Unknown protein 6 (24 aa).

The sequence is that of Unknown protein 6 from Lonomia obliqua (Moth).